The primary structure comprises 387 residues: Alpha-sarcoglycan (387 aa).

The first 23 residues, 1–23 (MAATLTWILLFVGLLAGLRDTKA), serve as a signal peptide directing secretion. The Extracellular segment spans residues 24–290 (QQTTLYPLVG…ATGRDFLADA (267 aa)). 2 N-linked (GlcNAc...) asparagine glycosylation sites follow: N174 and N246. A helical transmembrane segment spans residues 291 to 311 (LVTLLVPLLVALLLTLLLAYI). Over 312 to 387 (MCCRREGQLK…AQVPLILDQH (76 aa)) the chain is Cytoplasmic. S377 carries the post-translational modification Phosphoserine.

The protein belongs to the sarcoglycan alpha/epsilon family. Interacts with the syntrophin SNTA1. Cross-link to form 2 major subcomplexes: one consisting of SGCB, SGCD and SGCG and the other consisting of SGCB and SGCD. The association between SGCB and SGCG is particularly strong while SGCA is loosely associated with the other sarcoglycans. Strongly expressed in skeletal and heart muscle.

The protein resides in the cell membrane. The protein localises to the sarcolemma. Its subcellular location is the cytoplasm. It is found in the cytoskeleton. In terms of biological role, component of the sarcoglycan complex, a subcomplex of the dystrophin-glycoprotein complex which forms a link between the F-actin cytoskeleton and the extracellular matrix. The protein is Alpha-sarcoglycan (SGCA) of Mesocricetus auratus (Golden hamster).